The sequence spans 175 residues: Ribosome maturation factor RimM (175 aa).

The PRC barrel domain maps to 98–175 (EGEYYWHQLE…EMRVDWDADF (78 aa)).

Belongs to the RimM family. As to quaternary structure, binds ribosomal protein uS19.

The protein resides in the cytoplasm. In terms of biological role, an accessory protein needed during the final step in the assembly of 30S ribosomal subunit, possibly for assembly of the head region. Essential for efficient processing of 16S rRNA. May be needed both before and after RbfA during the maturation of 16S rRNA. It has affinity for free ribosomal 30S subunits but not for 70S ribosomes. The polypeptide is Ribosome maturation factor RimM (Pseudomonas aeruginosa (strain ATCC 15692 / DSM 22644 / CIP 104116 / JCM 14847 / LMG 12228 / 1C / PRS 101 / PAO1)).